Reading from the N-terminus, the 364-residue chain is UDP-3-O-acylglucosamine N-acyltransferase (364 aa).

His-258 (proton acceptor) is an active-site residue.

This sequence belongs to the transferase hexapeptide repeat family. LpxD subfamily. Homotrimer.

It carries out the reaction a UDP-3-O-[(3R)-3-hydroxyacyl]-alpha-D-glucosamine + a (3R)-hydroxyacyl-[ACP] = a UDP-2-N,3-O-bis[(3R)-3-hydroxyacyl]-alpha-D-glucosamine + holo-[ACP] + H(+). The protein operates within bacterial outer membrane biogenesis; LPS lipid A biosynthesis. Functionally, catalyzes the N-acylation of UDP-3-O-acylglucosamine using 3-hydroxyacyl-ACP as the acyl donor. Is involved in the biosynthesis of lipid A, a phosphorylated glycolipid that anchors the lipopolysaccharide to the outer membrane of the cell. The protein is UDP-3-O-acylglucosamine N-acyltransferase of Burkholderia orbicola (strain AU 1054).